The sequence spans 473 residues: Transposase for insertion sequence element IS1151 (473 aa).

It belongs to the transposase 11 family.

Its function is as follows. Involved in the transposition of the insertion sequence. The sequence is that of Transposase for insertion sequence element IS1151 (tnp) from Clostridium perfringens.